Consider the following 423-residue polypeptide: E3 ubiquitin-protein ligase makorin-2 (423 aa).

C3H1-type zinc fingers lie at residues 2-29 (STKQ…HDLN) and 31-58 (SKPS…HIKP). Positions 59–90 (SSRGGGGGAPEDQAGGGGAGGGGAGIGGAGGG) are disordered. Over residues 61–90 (RGGGGGAPEDQAGGGGAGGGGAGIGGAGGG) the composition is skewed to gly residues. A C3H1-type 3 zinc finger spans residues 162–189 (QNLPQLCPYAANGHCFYEENCTYLHGDL). The tract at residues 190 to 219 (CEVCGLQVLHPHDSEQRRAHEKMCLAAFEA) is makorin-type Cys-His. The segment at 235-289 (CSICMEVVVQKANPSDRRFGILSSCCHTFCLACIRKWRCTRTFSNTIIKSCPECR) adopts an RING-type zinc-finger fold. The C3H1-type 4 zinc finger occupies 318–347 (GVSKKACKYFDQGRGSCPFGGKCLYLHAFP).

The protein resides in the cytoplasm. It localises to the nucleus. It carries out the reaction S-ubiquitinyl-[E2 ubiquitin-conjugating enzyme]-L-cysteine + [acceptor protein]-L-lysine = [E2 ubiquitin-conjugating enzyme]-L-cysteine + N(6)-ubiquitinyl-[acceptor protein]-L-lysine.. Its pathway is protein modification; protein ubiquitination. In terms of biological role, E3 ubiquitin ligase catalyzing the covalent attachment of ubiquitin moieties onto substrate proteins. Inhibits neurogenesis and axis formation during embryonic development by modulating the phosphatidylinositol 3-kinase (PI3K) pathway. Acts downstream of PI3K and akt1 to up-regulate gsk3b mRNA expression. In Seriola quinqueradiata (Five-ray yellowtail), this protein is E3 ubiquitin-protein ligase makorin-2 (mkrn2).